Reading from the N-terminus, the 927-residue chain is Calmodulin-binding transcription activator CBT (927 aa).

Positions 26–152 form a DNA-binding region, CG-1; that stretch reads YEKLVAEAAA…YRQTAEENAM (127 aa). The interval 70 to 96 is necessary and sufficient for nuclear localization; the sequence is LYDRKVVRNFRKDGHNWKKKKDGRTVQ. Residues 72–79 carry the Nuclear localization signal motif; that stretch reads DRKVVRNF. The ANK repeat unit spans residues 609–638; the sequence is SGWTALHWAAYHGRERMVATLLSAGANPSL. 2 consecutive IQ domains span residues 757–786 and 799–828; these read EIVA…IQSH and MRRQ…SVGI. A calmodulin-binding region spans residues 826–845; that stretch reads VGIVEKAILRWRKKRKGLRG. Positions 830–851 are necessary and sufficient for nuclear localization; that stretch reads EKAILRWRKKRKGLRGIASGMP. The region spanning 882-911 is the IQ 3 domain; the sequence is FNRSVVRVQALFRSYKAQQEYRRMKIAHEE.

It belongs to the CAMTA family.

It localises to the nucleus. Its activity is regulated as follows. Transcriptional activation activity is strongly reduced by calmodulin. Functionally, transcription activator that binds calmodulin in a calcium-dependent manner in vitro. Binds to the DNA consensus sequence 5'-T[AC]CG[CT]GT[GT][GT][GT][GT]T[GT]CG-3'. This is Calmodulin-binding transcription activator CBT from Oryza sativa subsp. japonica (Rice).